The chain runs to 400 residues: Enoyl-[acyl-carrier-protein] reductase [NADH] 2 (400 aa).

NAD(+)-binding positions include Gly48–Phe53, Phe75–Glu76, Asp112–Ala113, and Leu141–Ala142. Tyr228 is a binding site for substrate. The active-site Proton donor is the Tyr238. Residues Lys247 and Leu276–Thr278 each bind NAD(+).

Belongs to the TER reductase family. In terms of assembly, monomer.

The enzyme catalyses a 2,3-saturated acyl-[ACP] + NAD(+) = a (2E)-enoyl-[ACP] + NADH + H(+). It functions in the pathway lipid metabolism; fatty acid biosynthesis. Its function is as follows. Involved in the final reduction of the elongation cycle of fatty acid synthesis (FAS II). Catalyzes the reduction of a carbon-carbon double bond in an enoyl moiety that is covalently linked to an acyl carrier protein (ACP). The sequence is that of Enoyl-[acyl-carrier-protein] reductase [NADH] 2 from Vibrio vulnificus (strain CMCP6).